The sequence spans 228 residues: Acyl-protein thioesterase 1 (228 aa).

Active-site charge relay system residues include Ser-119, Asp-174, and His-208.

Belongs to the AB hydrolase superfamily. AB hydrolase 2 family.

The protein resides in the cytoplasm. Its subcellular location is the nucleus. It catalyses the reaction S-hexadecanoyl-L-cysteinyl-[protein] + H2O = L-cysteinyl-[protein] + hexadecanoate + H(+). Functionally, hydrolyzes fatty acids from S-acylated cysteine residues in proteins with a strong preference for palmitoylated G-alpha proteins over other acyl substrates. Mediates the deacylation of G-alpha proteins such as GPA1 in vivo, but has weak or no activity toward palmitoylated Ras proteins. Has weak lysophospholipase activity in vitro; however such activity may not exist in vivo. The chain is Acyl-protein thioesterase 1 from Kluyveromyces lactis (strain ATCC 8585 / CBS 2359 / DSM 70799 / NBRC 1267 / NRRL Y-1140 / WM37) (Yeast).